Reading from the N-terminus, the 358-residue chain is Methylthioribose-1-phosphate isomerase (358 aa).

Substrate is bound by residues 54 to 56 (RGA), Arg96, and Gln205. Asp246 (proton donor) is an active-site residue. Substrate is bound at residue 256–257 (NK).

The protein belongs to the eIF-2B alpha/beta/delta subunits family. MtnA subfamily.

The enzyme catalyses 5-(methylsulfanyl)-alpha-D-ribose 1-phosphate = 5-(methylsulfanyl)-D-ribulose 1-phosphate. It participates in amino-acid biosynthesis; L-methionine biosynthesis via salvage pathway; L-methionine from S-methyl-5-thio-alpha-D-ribose 1-phosphate: step 1/6. Its function is as follows. Catalyzes the interconversion of methylthioribose-1-phosphate (MTR-1-P) into methylthioribulose-1-phosphate (MTRu-1-P). This Pseudomonas savastanoi pv. phaseolicola (strain 1448A / Race 6) (Pseudomonas syringae pv. phaseolicola (strain 1448A / Race 6)) protein is Methylthioribose-1-phosphate isomerase.